A 194-amino-acid polypeptide reads, in one-letter code: Protein GrpE (194 aa).

This sequence belongs to the GrpE family. In terms of assembly, homodimer.

Its subcellular location is the cytoplasm. Its function is as follows. Participates actively in the response to hyperosmotic and heat shock by preventing the aggregation of stress-denatured proteins, in association with DnaK and GrpE. It is the nucleotide exchange factor for DnaK and may function as a thermosensor. Unfolded proteins bind initially to DnaJ; upon interaction with the DnaJ-bound protein, DnaK hydrolyzes its bound ATP, resulting in the formation of a stable complex. GrpE releases ADP from DnaK; ATP binding to DnaK triggers the release of the substrate protein, thus completing the reaction cycle. Several rounds of ATP-dependent interactions between DnaJ, DnaK and GrpE are required for fully efficient folding. The sequence is that of Protein GrpE from Aliivibrio fischeri (strain MJ11) (Vibrio fischeri).